Consider the following 389-residue polypeptide: Acetate kinase (389 aa).

Position 9 (asparagine 9) interacts with Mg(2+). Lysine 16 is a binding site for ATP. Arginine 77 is a substrate binding site. Catalysis depends on aspartate 134, which acts as the Proton donor/acceptor. ATP is bound by residues 194–198 (HLGNG), 268–270 (DFR), and 316–320 (GVGEN). Residue glutamate 370 coordinates Mg(2+).

Belongs to the acetokinase family. As to quaternary structure, homodimer. Mg(2+) is required as a cofactor. The cofactor is Mn(2+).

The protein resides in the cytoplasm. It catalyses the reaction acetate + ATP = acetyl phosphate + ADP. Its pathway is metabolic intermediate biosynthesis; acetyl-CoA biosynthesis; acetyl-CoA from acetate: step 1/2. In terms of biological role, catalyzes the formation of acetyl phosphate from acetate and ATP. Can also catalyze the reverse reaction. This Mycolicibacterium vanbaalenii (strain DSM 7251 / JCM 13017 / BCRC 16820 / KCTC 9966 / NRRL B-24157 / PYR-1) (Mycobacterium vanbaalenii) protein is Acetate kinase.